Reading from the N-terminus, the 76-residue chain is uncharacterized protein (76 aa).

The chain crosses the membrane as a helical span at residues 18–38 (FISALFFFNAVCIVSDNLLII).

It is found in the cell membrane. This is an uncharacterized protein from Escherichia coli O6:H1 (strain CFT073 / ATCC 700928 / UPEC).